The sequence spans 277 residues: MASAGGGDCEGAGPEADRPHQRPFLIGVSGGTASGKSTVCEKIMELLGQNEVDHRQRKLVILSQDRFYKVLTAEQKAKALKGQYNFDHPDAFDNDLMHRTLKNIVEGKTVEVPTYDFVTHSRLAETTVVYPADVVLFEGILVFYSQEIRDMFHLRLFVDTDSDVRLSRRVLRDVQRGRDLEQILTQYTTFVKPAFEEFCLPTKKYADVIIPRGVDNMVAINLIVQHIQDILNGDICKWHRAGANGRSHKRTFPEPGEHPAVLASGKRSHLESSSRPH.

The span at 1 to 10 (MASAGGGDCE) shows a compositional bias: gly residues. The tract at residues 1–29 (MASAGGGDCEGAGPEADRPHQRPFLIGVS) is disordered. ATP is bound at residue 30-38 (GGTASGKST). Asp87, Tyr115, His120, Arg169, Arg178, and Gln186 together coordinate substrate. Asp215 is a binding site for ATP. Residues 246–277 (RSHKRTFPEPGEHPAVLASGKRSHLESSSRPH) form a disordered region. Thr251 is modified (phosphothreonine). Over residues 268 to 277 (SHLESSSRPH) the composition is skewed to basic and acidic residues.

Belongs to the uridine kinase family.

The enzyme catalyses uridine + ATP = UMP + ADP + H(+). The catalysed reaction is cytidine + ATP = CMP + ADP + H(+). It functions in the pathway pyrimidine metabolism; CTP biosynthesis via salvage pathway; CTP from cytidine: step 1/3. Its pathway is pyrimidine metabolism; UMP biosynthesis via salvage pathway; UMP from uridine: step 1/1. In terms of biological role, phosphorylates uridine and cytidine to uridine monophosphate and cytidine monophosphate. Does not phosphorylate deoxyribonucleosides or purine ribonucleosides. Can use ATP or GTP as a phosphate donor. In Bos taurus (Bovine), this protein is Uridine-cytidine kinase 1 (UCK1).